We begin with the raw amino-acid sequence, 183 residues long: Glutathione-regulated potassium-efflux system ancillary protein KefG (183 aa).

The protein belongs to the NAD(P)H dehydrogenase (quinone) family. KefG subfamily. In terms of assembly, interacts with KefB.

It is found in the cell inner membrane. The catalysed reaction is a quinone + NADH + H(+) = a quinol + NAD(+). It carries out the reaction a quinone + NADPH + H(+) = a quinol + NADP(+). Its function is as follows. Regulatory subunit of a potassium efflux system that confers protection against electrophiles. Required for full activity of KefB. This is Glutathione-regulated potassium-efflux system ancillary protein KefG from Escherichia coli O6:K15:H31 (strain 536 / UPEC).